The primary structure comprises 302 residues: Methionyl-tRNA formyltransferase (302 aa).

107 to 110 (SDLP) contributes to the (6S)-5,6,7,8-tetrahydrofolate binding site.

It belongs to the Fmt family.

It catalyses the reaction L-methionyl-tRNA(fMet) + (6R)-10-formyltetrahydrofolate = N-formyl-L-methionyl-tRNA(fMet) + (6S)-5,6,7,8-tetrahydrofolate + H(+). In terms of biological role, attaches a formyl group to the free amino group of methionyl-tRNA(fMet). The formyl group appears to play a dual role in the initiator identity of N-formylmethionyl-tRNA by promoting its recognition by IF2 and preventing the misappropriation of this tRNA by the elongation apparatus. The protein is Methionyl-tRNA formyltransferase of Rickettsia massiliae (strain Mtu5).